Consider the following 179-residue polypeptide: Protein GrpE (179 aa).

It belongs to the GrpE family. As to quaternary structure, homodimer.

It localises to the cytoplasm. Functionally, participates actively in the response to hyperosmotic and heat shock by preventing the aggregation of stress-denatured proteins, in association with DnaK and GrpE. It is the nucleotide exchange factor for DnaK and may function as a thermosensor. Unfolded proteins bind initially to DnaJ; upon interaction with the DnaJ-bound protein, DnaK hydrolyzes its bound ATP, resulting in the formation of a stable complex. GrpE releases ADP from DnaK; ATP binding to DnaK triggers the release of the substrate protein, thus completing the reaction cycle. Several rounds of ATP-dependent interactions between DnaJ, DnaK and GrpE are required for fully efficient folding. The sequence is that of Protein GrpE from Rickettsia felis (strain ATCC VR-1525 / URRWXCal2) (Rickettsia azadi).